A 130-amino-acid polypeptide reads, in one-letter code: Fumarate reductase subunit C (130 aa).

A run of 3 helical transmembrane segments spans residues 33-53 (AVTT…LKGG), 60-80 (FVTF…LLGA), and 109-129 (VIKL…GIAL).

It belongs to the FrdC family. As to quaternary structure, part of an enzyme complex containing four subunits: a flavoprotein (FrdA), an iron-sulfur protein (FrdB), and two hydrophobic anchor proteins (FrdC and FrdD).

It is found in the cell inner membrane. Functionally, two distinct, membrane-bound, FAD-containing enzymes are responsible for the catalysis of fumarate and succinate interconversion; fumarate reductase is used in anaerobic growth, and succinate dehydrogenase is used in aerobic growth. Anchors the catalytic components of the fumarate reductase complex to the cell inner membrane, binds quinones. This chain is Fumarate reductase subunit C, found in Photorhabdus laumondii subsp. laumondii (strain DSM 15139 / CIP 105565 / TT01) (Photorhabdus luminescens subsp. laumondii).